Here is a 710-residue protein sequence, read N- to C-terminus: Adenylosuccinate synthetase (710 aa).

Residues 1–54 (MPVRRYGGRYNSSSPGVSNALNPSRTAGWPLSPSPATGSKPASTHHDPVPQEAY) form a disordered region. Polar residues predominate over residues 10–25 (YNSSSPGVSNALNPSR). A compositionally biased stretch (basic and acidic residues) spans 44-54 (THHDPVPQEAY). Residues 180 to 186 (GDEGKGK) and 210 to 212 (GHT) each bind GTP. The active-site Proton acceptor is the Asp181. Mg(2+)-binding residues include Asp181 and Gly210. Residues 181-184 (DEGK), 208-211 (NAGH), Thr295, Lys309, Gln421, Thr437, and Lys567 each bind IMP. The active-site Proton donor is the His211. 563–569 (AVTKKPR) is a binding site for substrate. Residues Arg569 and 697-699 (GNG) contribute to the GTP site.

It belongs to the adenylosuccinate synthetase family. As to quaternary structure, homodimer. Mg(2+) is required as a cofactor.

It is found in the cytoplasm. It carries out the reaction IMP + L-aspartate + GTP = N(6)-(1,2-dicarboxyethyl)-AMP + GDP + phosphate + 2 H(+). The protein operates within purine metabolism; AMP biosynthesis via de novo pathway; AMP from IMP: step 1/2. In terms of biological role, plays an important role in the salvage pathway for purine nucleotide biosynthesis. Catalyzes the first committed step in the biosynthesis of AMP from IMP. This is Adenylosuccinate synthetase from Leishmania major.